The sequence spans 263 residues: Cobalt-precorrin-6A reductase (263 aa).

Belongs to the precorrin-6x reductase family.

It catalyses the reaction Co-precorrin-6B + NAD(+) = Co-precorrin-6A + NADH + H(+). Its pathway is cofactor biosynthesis; adenosylcobalamin biosynthesis; cob(II)yrinate a,c-diamide from sirohydrochlorin (anaerobic route): step 7/10. Its function is as follows. Catalyzes the reduction of the macrocycle of cobalt-precorrin-6A to cobalt-precorrin-6B. The protein is Cobalt-precorrin-6A reductase (cbiJ) of Salmonella typhimurium (strain LT2 / SGSC1412 / ATCC 700720).